A 142-amino-acid polypeptide reads, in one-letter code: Small heat shock protein IbpB (142 aa).

The sHSP domain occupies 26-137 (AGESQSFPPY…APQRIAISER (112 aa)).

Belongs to the small heat shock protein (HSP20) family. Homodimer. Forms homomultimers of about 100-150 subunits at optimal growth temperatures. Conformation changes to oligomers at high temperatures or high ionic concentrations. The decrease in size of the multimers is accompanied by an increase in chaperone activity.

The protein localises to the cytoplasm. Associates with aggregated proteins, together with IbpA, to stabilize and protect them from irreversible denaturation and extensive proteolysis during heat shock and oxidative stress. Aggregated proteins bound to the IbpAB complex are more efficiently refolded and reactivated by the ATP-dependent chaperone systems ClpB and DnaK/DnaJ/GrpE. Its activity is ATP-independent. The protein is Small heat shock protein IbpB of Klebsiella pneumoniae subsp. pneumoniae (strain ATCC 700721 / MGH 78578).